We begin with the raw amino-acid sequence, 264 residues long: 3-methyl-2-oxobutanoate hydroxymethyltransferase (264 aa).

2 residues coordinate Mg(2+): Asp-45 and Asp-84. 3-methyl-2-oxobutanoate contacts are provided by residues 45–46 (DS), Asp-84, and Lys-112. A Mg(2+)-binding site is contributed by Glu-114. Glu-181 acts as the Proton acceptor in catalysis.

The protein belongs to the PanB family. As to quaternary structure, homodecamer; pentamer of dimers. Mg(2+) is required as a cofactor.

It localises to the cytoplasm. The enzyme catalyses 3-methyl-2-oxobutanoate + (6R)-5,10-methylene-5,6,7,8-tetrahydrofolate + H2O = 2-dehydropantoate + (6S)-5,6,7,8-tetrahydrofolate. It participates in cofactor biosynthesis; (R)-pantothenate biosynthesis; (R)-pantoate from 3-methyl-2-oxobutanoate: step 1/2. Functionally, catalyzes the reversible reaction in which hydroxymethyl group from 5,10-methylenetetrahydrofolate is transferred onto alpha-ketoisovalerate to form ketopantoate. The chain is 3-methyl-2-oxobutanoate hydroxymethyltransferase from Vibrio atlanticus (strain LGP32) (Vibrio splendidus (strain Mel32)).